The sequence spans 208 residues: MKNIHCINHPLIEHKLGILRAKETKPFQFRMLIDEISSFLLFEASKDFSLKEIEISTPIQKTTVKKLDEKIMICPILRAALGMLESVFKMIPDASVGFLGFVRNEETLKADFYFQKLPKDAKKRTAIVIDPMFATGGTAIEACNFLKSQGVKKIKFISILAAPQGLKKFSQMHDDVEVFVACIDEGLNEKGYIIPGLGDAGDRVFNTL.

Residues arginine 78, arginine 103, and aspartate 130–threonine 138 each bind 5-phospho-alpha-D-ribose 1-diphosphate. Residues isoleucine 193 and glycine 198–alanine 200 each bind uracil. Aspartate 199 provides a ligand contact to 5-phospho-alpha-D-ribose 1-diphosphate.

This sequence belongs to the UPRTase family. Requires Mg(2+) as cofactor.

It carries out the reaction UMP + diphosphate = 5-phospho-alpha-D-ribose 1-diphosphate + uracil. It functions in the pathway pyrimidine metabolism; UMP biosynthesis via salvage pathway; UMP from uracil: step 1/1. Its activity is regulated as follows. Allosterically activated by GTP. Catalyzes the conversion of uracil and 5-phospho-alpha-D-ribose 1-diphosphate (PRPP) to UMP and diphosphate. The protein is Uracil phosphoribosyltransferase of Campylobacter jejuni subsp. jejuni serotype O:6 (strain 81116 / NCTC 11828).